The sequence spans 449 residues: Elongation factor 1-alpha (449 aa).

Positions 5 to 230 (KVHMNLVVVG…DMLEPPVRPS (226 aa)) constitute a tr-type G domain. The G1 stretch occupies residues 14 to 21 (GHVDAGKS). Residue 14-21 (GHVDAGKS) participates in GTP binding. The G2 stretch occupies residues 70–74 (GITID). The G3 stretch occupies residues 91–94 (DAPG). Residues 91-95 (DAPGH) and 153-156 (NKMD) each bind GTP. A G4 region spans residues 153–156 (NKMD). The tract at residues 194–196 (SGW) is G5. At Glu-362 the chain carries 5-glutamyl glycerylphosphorylethanolamine.

Belongs to the TRAFAC class translation factor GTPase superfamily. Classic translation factor GTPase family. EF-Tu/EF-1A subfamily. In terms of processing, phosphatidylethanolamine (PE) is a direct precursor of the ethanolamine-phosphoglycerol (EPG) moiety.

Its subcellular location is the cytoplasm. This protein promotes the GTP-dependent binding of aminoacyl-tRNA to the A-site of ribosomes during protein biosynthesis. This Trypanosoma brucei brucei protein is Elongation factor 1-alpha (TEF1).